Reading from the N-terminus, the 422-residue chain is Phosphoribosylamine--glycine ligase (422 aa).

One can recognise an ATP-grasp domain in the interval 107–312 (KDVMAAAGVR…LGQLLHAAAT (206 aa)). An ATP-binding site is contributed by 137 to 193 (GPPAGDPAWVVKDDRLAAGKGVVVTADRDVARAHGAALLEAGHPVLLESYLDGPEVS). 2 residues coordinate Mg(2+): Glu-282 and Asn-284.

The protein belongs to the GARS family. Mg(2+) is required as a cofactor. It depends on Mn(2+) as a cofactor.

It carries out the reaction 5-phospho-beta-D-ribosylamine + glycine + ATP = N(1)-(5-phospho-beta-D-ribosyl)glycinamide + ADP + phosphate + H(+). Its pathway is purine metabolism; IMP biosynthesis via de novo pathway; N(1)-(5-phospho-D-ribosyl)glycinamide from 5-phospho-alpha-D-ribose 1-diphosphate: step 2/2. This chain is Phosphoribosylamine--glycine ligase, found in Mycobacterium bovis (strain ATCC BAA-935 / AF2122/97).